The primary structure comprises 264 residues: MWLGEYTWLNVFGIFLQATFIQNILLSNFLGMCSYLACSARVSTANGLGMSVALVLTVTGSINWVVHTFITGPKALTWISPSLANVNLNFLELIIFIVVIAAFTQILELLLEKVSRNLYLSLGIFLPLIAVNCAILGGVLFGITRNYPFIPMMIFSLGAGCGWWLAIVLFATIKEKLAYSDIPKNLQGMGISFITTGLIAMAFMSLTGIDISKPSAAAPTSDILETPNASSITTTNLKPVKKVRIAQQRAAKEKAINIKRGKTQ.

Helical transmembrane passes span 11-31, 50-70, 90-110, 123-143, 149-169, and 189-209; these read VFGIFLQATFIQNILLSNFLG, MSVALVLTVTGSINWVVHTFI, FLELIIFIVVIAAFTQILELL, GIFLPLIAVNCAILGGVLFGI, FIPMMIFSLGAGCGWWLAIVL, and MGISFITTGLIAMAFMSLTGI.

The protein belongs to the NqrDE/RnfAE family. In terms of assembly, composed of six subunits; NqrA, NqrB, NqrC, NqrD, NqrE and NqrF.

It localises to the cell inner membrane. The catalysed reaction is a ubiquinone + n Na(+)(in) + NADH + H(+) = a ubiquinol + n Na(+)(out) + NAD(+). Its function is as follows. NQR complex catalyzes the reduction of ubiquinone-1 to ubiquinol by two successive reactions, coupled with the transport of Na(+) ions from the cytoplasm to the periplasm. NqrA to NqrE are probably involved in the second step, the conversion of ubisemiquinone to ubiquinol. The protein is Na(+)-translocating NADH-quinone reductase subunit E of Chlamydia caviae (strain ATCC VR-813 / DSM 19441 / 03DC25 / GPIC) (Chlamydophila caviae).